A 606-amino-acid polypeptide reads, in one-letter code: Kelch-like protein 26 (606 aa).

Positions 1 to 19 are enriched in low complexity; it reads MAESGGSSGSSQSPERPSS. A disordered region spans residues 1–20; the sequence is MAESGGSSGSSQSPERPSSL. Ala2 is subject to N-acetylalanine. The region spanning 54-121 is the BTB domain; it reads LDVVLTVNSE…AYSAEVTLDL (68 aa). The BACK domain occupies 156-257; that stretch reads CLHIGQMATT…QPAELVDSVQ (102 aa). Kelch repeat units lie at residues 301–352, 353–404, 406–451, 452–499, 501–550, and 552–599; these read SLVA…VLDN, FVYV…ALGG, LYAT…AAAG, RLYI…GAAG, IYAL…LLER, and IYIV…AVLL. Phosphoserine is present on Ser430.

May play a role in endo(sarco)plasmic reticulum (ER/SR) mitochondrial signaling. May be part of the ubiquitin-proteasome system (UPS) and affect ubiquitination and degradation of target substrates in cardiomyocytes. The polypeptide is Kelch-like protein 26 (Klhl26) (Mus musculus (Mouse)).